Reading from the N-terminus, the 151-residue chain is Multiprotein-bridging factor 1 (151 aa).

2 disordered regions span residues 1–29 and 78–98; these read MSDWDTNTIIGSRARAGGSGPRANVARSQ and DPNVGRAISRARTDKKMSQKD. The tract at residues 41 to 119 is essential for TBP-binding; sequence VVSVDKKYGS…VNDYEAARAI (79 aa). The HTH cro/C1-type domain maps to 85-139; it reads ISRARTDKKMSQKDLATKINEKPTVVNDYEAARAIPNQQVLSKLERALGVKLRGN. A compositionally biased stretch (basic and acidic residues) spans 88–98; sequence ARTDKKMSQKD. Residues 96–115 constitute a DNA-binding region (H-T-H motif); it reads QKDLATKINEKPTVVNDYEA. A Phosphoserine modification is found at Ser-143.

Belongs to the MBF1 family. In terms of assembly, interacts with TBP and the transcription factor GCN4. Interacts with RPS3/us3.

Its subcellular location is the cytoplasm. It is found in the nucleus. Functionally, transcriptional coactivator that stimulates GCN4-dependent transcriptional activity by bridging the DNA-binding region of GCN4 and TBP (SPT15), thereby recruiting TBP to GCN4-bound promoters. Involved in induction of the ribosome quality control (RQC) pathway; a pathway that degrades nascent peptide chains during problematic translation. Required to prevent stalled ribosomes from frameshifting. The chain is Multiprotein-bridging factor 1 (MBF1) from Saccharomyces cerevisiae (strain ATCC 204508 / S288c) (Baker's yeast).